The sequence spans 502 residues: ATP synthase subunit alpha (502 aa).

169-176 (GDRQTGKT) provides a ligand contact to ATP.

The protein belongs to the ATPase alpha/beta chains family. F-type ATPases have 2 components, CF(1) - the catalytic core - and CF(0) - the membrane proton channel. CF(1) has five subunits: alpha(3), beta(3), gamma(1), delta(1), epsilon(1). CF(0) has three main subunits: a(1), b(2) and c(9-12). The alpha and beta chains form an alternating ring which encloses part of the gamma chain. CF(1) is attached to CF(0) by a central stalk formed by the gamma and epsilon chains, while a peripheral stalk is formed by the delta and b chains.

The protein resides in the cell membrane. It catalyses the reaction ATP + H2O + 4 H(+)(in) = ADP + phosphate + 5 H(+)(out). Its function is as follows. Produces ATP from ADP in the presence of a proton gradient across the membrane. The alpha chain is a regulatory subunit. The polypeptide is ATP synthase subunit alpha (Bacillus velezensis (strain DSM 23117 / BGSC 10A6 / LMG 26770 / FZB42) (Bacillus amyloliquefaciens subsp. plantarum)).